We begin with the raw amino-acid sequence, 103 residues long: Small ribosomal subunit protein uS10 (103 aa).

The protein belongs to the universal ribosomal protein uS10 family. As to quaternary structure, part of the 30S ribosomal subunit.

Its function is as follows. Involved in the binding of tRNA to the ribosomes. This chain is Small ribosomal subunit protein uS10, found in Salinibacter ruber (strain DSM 13855 / M31).